A 362-amino-acid polypeptide reads, in one-letter code: Class I histocompatibility antigen, Gogo-B*0103 alpha chain (362 aa).

Residues 1 to 24 form the signal peptide; that stretch reads MRVTAPRTLLLLLSAALALTETWA. An alpha-1 region spans residues 25 to 114; that stretch reads GSHSMRYFDT…ALRYYNQSEA (90 aa). Residues 25–308 lie on the Extracellular side of the membrane; sequence GSHSMRYFDT…EPSSQSTIPI (284 aa). An N-linked (GlcNAc...) asparagine glycan is attached at Asn110. The alpha-2 stretch occupies residues 115-206; the sequence is GSHTIQWMYG…ENGRETLQRA (92 aa). 2 disulfides stabilise this stretch: Cys125/Cys188 and Cys227/Cys283. The alpha-3 stretch occupies residues 207–298; the sequence is DTPKTHVTHH…GLPKPLTLRW (92 aa). Residues 209 to 295 form the Ig-like C1-type domain; sequence PKTHVTHHPI…QHEGLPKPLT (87 aa). Positions 299 to 308 are connecting peptide; it reads EPSSQSTIPI. Residues 309 to 332 traverse the membrane as a helical segment; it reads VGIVAGLAVLAVVVIGAVVTAVIC. Over 333 to 362 the chain is Cytoplasmic; the sequence is RRKSSGGKGGSYSQAASSDSAQGSDVSLTA. A disordered region spans residues 335–362; that stretch reads KSSGGKGGSYSQAASSDSAQGSDVSLTA. Positions 343-362 are enriched in low complexity; the sequence is SYSQAASSDSAQGSDVSLTA.

Belongs to the MHC class I family. Heterodimer of an alpha chain and a beta chain (beta-2-microglobulin).

It localises to the membrane. Its function is as follows. Involved in the presentation of foreign antigens to the immune system. The sequence is that of Class I histocompatibility antigen, Gogo-B*0103 alpha chain from Gorilla gorilla gorilla (Western lowland gorilla).